The sequence spans 352 residues: 7,8-didemethyl-8-hydroxy-5-deazariboflavin synthase (352 aa).

The Radical SAM core domain occupies 35–275; the sequence is ITFSKNAFIP…EDISIQVPPN (241 aa). Residues cysteine 49, cysteine 53, and cysteine 56 each contribute to the [4Fe-4S] cluster site.

It belongs to the radical SAM superfamily. CofG family. Consists of two subunits, CofG and CofH. [4Fe-4S] cluster is required as a cofactor.

It carries out the reaction 5-amino-5-(4-hydroxybenzyl)-6-(D-ribitylimino)-5,6-dihydrouracil + S-adenosyl-L-methionine = 7,8-didemethyl-8-hydroxy-5-deazariboflavin + 5'-deoxyadenosine + L-methionine + NH4(+) + H(+). It participates in cofactor biosynthesis; coenzyme F0 biosynthesis. Catalyzes the radical-mediated synthesis of 7,8-didemethyl-8-hydroxy-5-deazariboflavin from 5-amino-5-(4-hydroxybenzyl)-6-(D-ribitylimino)-5,6-dihydrouracil. The polypeptide is 7,8-didemethyl-8-hydroxy-5-deazariboflavin synthase (Methanococcus maripaludis (strain C6 / ATCC BAA-1332)).